The chain runs to 740 residues: Catalase-peroxidase (740 aa).

Residues 1–16 are compositionally biased toward basic and acidic residues; the sequence is MSENHDAIVTDAKTEE. The interval 1-38 is disordered; sequence MSENHDAIVTDAKTEETDGCPVAHGRAPHPTQGGGNRQ. The segment at residues 108–231 is a cross-link (tryptophyl-tyrosyl-methioninium (Trp-Tyr) (with M-257)); the sequence is WHSAGTYRIS…LGAVQMGLIY (124 aa). His109 functions as the Proton acceptor in the catalytic mechanism. A cross-link (tryptophyl-tyrosyl-methioninium (Tyr-Met) (with W-108)) is located at residues 231–257; sequence YVNPEGPNGNPDPIAAARDIRETFRRM. His272 serves as a coordination point for heme b.

Belongs to the peroxidase family. Peroxidase/catalase subfamily. In terms of assembly, homodimer. Requires heme b as cofactor. In terms of processing, formation of the three residue Trp-Tyr-Met cross-link is important for the catalase, but not the peroxidase activity of the enzyme.

The enzyme catalyses H2O2 + AH2 = A + 2 H2O. It carries out the reaction 2 H2O2 = O2 + 2 H2O. Bifunctional enzyme with both catalase and broad-spectrum peroxidase activity. The chain is Catalase-peroxidase from Streptomyces coelicolor (strain ATCC BAA-471 / A3(2) / M145).